The primary structure comprises 880 residues: MSTVEPNVYDPHQVETSAQQFWDATRAFQVDENSEKPKFYCLSMLPYPSGALHMGHVRNYTISDVVSRYKRMTGHNVLQPMGWDAFGLPAENAAIKNKTAPAKWTYANIAHMRAQLKSLGYAIDWSREFATCTPDYYVHEQRMFTRLMRKGLAYRRNAVVNWDPIDQTVLANEQVIDGRGWRSGAVVEKREIPQWFLRITDYAQELLDGLDQLDGWPDSVKTMQRNWIGRSEGLEIQFDVRDTNGAALDPLRVFTTRPDTLMGVTFVSIAAEHPLALHAAKSNPELAALLETLKHGGVSEAELETQEKRGMATGLTAVHPISGEQVPVWVANFVLMGYGTGAVMAVPGHDQRDFEFANKYGLPIVQVVKLREPRNDDEQRWDATEWRDWYTDKSRELELINSAEFDGLDFGGAFEALAERFERKGQGQRRVNYRLRDWGVSRQRYWGCPIPVIYCPKCGAVPVPEDQLPVVLPENVEFACTGSPIKTDPTWRQTTCPDCGGPAERETDTFDTFMESSWYVARYTSPNAREMVDRRANYWMPADLYVGGIEHAILHLMYFRFYHKLMRDARLVDSDEPVTNLLTQGMVIADTFYRDADNGGKDWINPADVEIQRDERGRVTGAVLIADGQPVHIGGTEKMSKSKNNGVDPQSMVAKYGADTVRLFSMFAAPPEQSLEWNEAGVDGMARFMRRLWAQVHKHVGEGAAVALDVAALSAEQKAIRRKTHETIGKVSDDYGRRHSFNTAIAAVMELSNALAKFDDASDQGRAVRQEALEAMVLLLNPITPHASHALWQVLGRGETLLENVAFPQADVSALVRDALTLAVQINGKLRGTIDVAADAAREQIEALAQAEPNAAKFLDGLSVRKIIIVPGKIVNIVAG.

The 'HIGH' region motif lies at 46–56 (PYPSGALHMGH). Residues 638–642 (KMSKS) carry the 'KMSKS' region motif. K641 is a binding site for ATP.

Belongs to the class-I aminoacyl-tRNA synthetase family.

The protein localises to the cytoplasm. It carries out the reaction tRNA(Leu) + L-leucine + ATP = L-leucyl-tRNA(Leu) + AMP + diphosphate. This Xanthomonas oryzae pv. oryzae (strain KACC10331 / KXO85) protein is Leucine--tRNA ligase.